The sequence spans 446 residues: O-antigen polymerase (446 aa).

A run of 11 helical transmembrane segments spans residues 11-31, 33-53, 58-78, 104-124, 147-167, 186-206, 211-231, 252-272, 355-375, 391-411, and 415-435; these read ICSY…VINE, FCEI…VIII, QGGF…FILI, IYVF…VLLY, QLSM…IKSY, LYDE…SLLF, NFIL…LVGL, LKIK…SLFL, IYLG…SLAF, KLAY…IYFA, and LFDF…LSIV.

The protein resides in the cell inner membrane. It carries out the reaction n lipid-linked O-antigen repeat units = a lipid-linked O antigen + (n-1) polyisoprenyl diphosphate.. The protein operates within bacterial outer membrane biogenesis; LPS O-antigen biosynthesis. Functionally, polymerase involved in the biosynthesis of the lipopolysaccharide (LPS). Catalyzes the polymerization of the O-antigen repeat units on the periplasmic face of the inner membrane, leading to the formation of the lipid-linked O-antigen molecule. In vitro, shows a preference for bacteria-based, undecaprenyl-containing substrates rather than eukaryote-based, dolichol-containing substrates. This chain is O-antigen polymerase, found in Escherichia coli.